The following is a 411-amino-acid chain: Putative ion-transport protein YfeO (411 aa).

11 helical membrane-spanning segments follow: residues 9–29 (MLLL…VLIA), 54–74 (DSPF…GLII), 99–119 (ALPG…SLGP), 149–169 (ILAS…AALI), 186–206 (LFAP…FFHP), 223–243 (IASG…AVWC), 258–278 (VLIL…GGPL), 296–316 (LGAG…VIAA), 322–342 (GGRI…LHAH), 343–363 (VEAV…VLVV), and 386–406 (LLCI…LLAA).

The protein belongs to the chloride channel (TC 2.A.49) family.

The protein resides in the cell membrane. The chain is Putative ion-transport protein YfeO from Salmonella agona (strain SL483).